A 212-amino-acid polypeptide reads, in one-letter code: Phosphatidylserine decarboxylase proenzyme (212 aa).

Serine 182 (schiff-base intermediate with substrate; via pyruvic acid) is an active-site residue. Serine 182 carries the post-translational modification Pyruvic acid (Ser); by autocatalysis.

The protein belongs to the phosphatidylserine decarboxylase family. PSD-A subfamily. Heterodimer of a large membrane-associated beta subunit and a small pyruvoyl-containing alpha subunit. Requires pyruvate as cofactor. Post-translationally, is synthesized initially as an inactive proenzyme. Formation of the active enzyme involves a self-maturation process in which the active site pyruvoyl group is generated from an internal serine residue via an autocatalytic post-translational modification. Two non-identical subunits are generated from the proenzyme in this reaction, and the pyruvate is formed at the N-terminus of the alpha chain, which is derived from the carboxyl end of the proenzyme. The post-translation cleavage follows an unusual pathway, termed non-hydrolytic serinolysis, in which the side chain hydroxyl group of the serine supplies its oxygen atom to form the C-terminus of the beta chain, while the remainder of the serine residue undergoes an oxidative deamination to produce ammonia and the pyruvoyl prosthetic group on the alpha chain.

Its subcellular location is the cell membrane. It catalyses the reaction a 1,2-diacyl-sn-glycero-3-phospho-L-serine + H(+) = a 1,2-diacyl-sn-glycero-3-phosphoethanolamine + CO2. Its pathway is phospholipid metabolism; phosphatidylethanolamine biosynthesis; phosphatidylethanolamine from CDP-diacylglycerol: step 2/2. Catalyzes the formation of phosphatidylethanolamine (PtdEtn) from phosphatidylserine (PtdSer). This chain is Phosphatidylserine decarboxylase proenzyme, found in Pelodictyon phaeoclathratiforme (strain DSM 5477 / BU-1).